A 210-amino-acid chain; its full sequence is Transposable element activator uncharacterized 23 kDa protein (210 aa).

Basic and acidic residues predominate over residues 67–78 (SGRMGGPRRDGR). The disordered stretch occupies residues 67–87 (SGRMGGPRRDGRVASSGVEGG).

The polypeptide is Transposable element activator uncharacterized 23 kDa protein (Zea mays (Maize)).